Consider the following 170-residue polypeptide: Calcineurin subunit B type 2 (170 aa).

G2 is lipidated: N-myristoyl glycine. EF-hand domains follow at residues 18–46, 50–85, 87–122, and 128–163; these read DEIK…FTSM, QENP…FSVR, DEEQ…MVGD, and QLQQ…LEIH. 10 residues coordinate Ca(2+): D63, D65, D67, Q69, E74, D100, D102, D104, Y106, and E111. The calcineurin A binding stretch occupies residues 131-136; that stretch reads QLVDKT. D141, D143, D145, K147, and E152 together coordinate Ca(2+).

It belongs to the calcineurin regulatory subunit family. In terms of assembly, forms a complex composed of a calmodulin-dependent catalytic subunit (also known as calcineurin A) and a regulatory Ca(2+)-binding subunit (also known as calcineurin B). There are three catalytic subunits, each encoded by a separate gene (PPP3CA, PPP3CB, and PPP3CC) and two regulatory subunits which are also encoded by separate genes (PPP3R1 and PPP3R2). Interacts with SPATA33 (via PQIIIT motif).

The protein localises to the mitochondrion. Functionally, regulatory subunit of calcineurin, a calcium-dependent, calmodulin stimulated protein phosphatase. Confers calcium sensitivity. The polypeptide is Calcineurin subunit B type 2 (PPP3R2) (Bos taurus (Bovine)).